A 387-amino-acid polypeptide reads, in one-letter code: Cell surface GPI-anchored protein ARB_01627 (387 aa).

Positions 1 to 19 (MAITKYLVSALAVAGLAFA) are cleaved as a signal peptide. N-linked (GlcNAc...) asparagine glycosylation is found at N73, N175, N201, N206, N231, N236, N253, and N270. Residues 338–361 (TCRERQEKPKTGDDHSGGDEEGHK) show a composition bias toward basic and acidic residues. A disordered region spans residues 338 to 362 (TCRERQEKPKTGDDHSGGDEEGHKG). A lipid anchor (GPI-anchor amidated alanine) is attached at A364. The propeptide at 365 to 387 (AAFAKAPAAALLIAFVGALQFFL) is removed in mature form.

This sequence belongs to the SPS2 family. In terms of processing, the GPI-anchor is attached to the protein in the endoplasmic reticulum and serves to target the protein to the cell surface. There, the glucosamine-inositol phospholipid moiety is cleaved off and the GPI-modified mannoprotein is covalently attached via its lipidless GPI glycan remnant to the 1,6-beta-glucan of the outer cell wall layer.

It localises to the cell membrane. The protein localises to the secreted. The protein resides in the cell wall. Required for proper cell wall integrity and for the correct assembly of the mannoprotein outer layer of the cell wall. This chain is Cell surface GPI-anchored protein ARB_01627, found in Arthroderma benhamiae (strain ATCC MYA-4681 / CBS 112371) (Trichophyton mentagrophytes).